The following is a 136-amino-acid chain: Antistasin (136 aa).

An N-terminal signal peptide occupies residues 1 to 17; sequence MIKLAILLLFTVAIVRC. Gln-18 bears the Pyrrolidone carboxylic acid mark. 10 cysteine pairs are disulfide-bonded: Cys-25–Cys-36, Cys-30–Cys-43, Cys-45–Cys-65, Cys-50–Cys-68, Cys-54–Cys-70, Cys-79–Cys-90, Cys-84–Cys-97, Cys-99–Cys-120, Cys-105–Cys-123, and Cys-109–Cys-125. Residues 45–70 enclose the Antistasin-like 1 domain; that stretch reads CSGVRCRMHCPHGFQRSRYGCEFCKC. The region spanning 100–125 is the Antistasin-like 2 domain; it reads KIDINCRKTCPNGLKRDKLGCEYCEC. Residues 114-117 and 128-135 each bind heparin; these read KRDK and KRKLIPRL.

This sequence belongs to the protease inhibitor I15 (antistasin) family.

The protein localises to the secreted. In terms of biological role, this highly disulfide-bonded protein is a potent inhibitor of factor Xa. May have therapeutic utility as an anticoagulant. Also exhibits a strong metastatic activity. In Haementeria officinalis (Mexican leech), this protein is Antistasin.